Reading from the N-terminus, the 253-residue chain is MKHIVIPARFSSSRLPGKPLLLIHDRPMILRVVDQAKKVEGFDDLCVATDDERIAEICRAEGVDVVLTSADHPSGTDRLSEVARIKGWDADDIIVNVQGDEPLLPAQLVQQVAKLLVDKPNCSMSTLCEPIHALDEFQRDSIVKVVMSKQNEALYFSRATIPYDRDSAKQAEPTLHSQAFRHLGLYAYRVSLLQEYVTWEMGKLEKLESLEQLRVLENGHRIAIAVAEANLPPGVDTQADLDRLNNMPVESFE.

The protein belongs to the KdsB family.

It localises to the cytoplasm. It catalyses the reaction 3-deoxy-alpha-D-manno-oct-2-ulosonate + CTP = CMP-3-deoxy-beta-D-manno-octulosonate + diphosphate. The protein operates within nucleotide-sugar biosynthesis; CMP-3-deoxy-D-manno-octulosonate biosynthesis; CMP-3-deoxy-D-manno-octulosonate from 3-deoxy-D-manno-octulosonate and CTP: step 1/1. It functions in the pathway bacterial outer membrane biogenesis; lipopolysaccharide biosynthesis. Functionally, activates KDO (a required 8-carbon sugar) for incorporation into bacterial lipopolysaccharide in Gram-negative bacteria. This is 3-deoxy-manno-octulosonate cytidylyltransferase from Acinetobacter baumannii (strain SDF).